A 242-amino-acid chain; its full sequence is Platinum sensitivity protein 3 (242 aa).

Component of the SHU complex composed of at least CSM2, PSY3, SHU1 and SHU2.

The protein resides in the nucleus. In terms of biological role, required for resistance to the DNA-damaging agents methyl methanesulfonate (MMS), cisplatin and oxaliplatin, but not to mitomycin C. Plays a role in protection against mutation accumulation. May be a component of the recombination-repair pathway. The protein is Platinum sensitivity protein 3 (PSY3) of Saccharomyces cerevisiae (strain ATCC 204508 / S288c) (Baker's yeast).